A 292-amino-acid polypeptide reads, in one-letter code: uncharacterized protein (292 aa).

Belongs to the glycosyltransferase 2 family. WaaE/KdtX subfamily.

This is an uncharacterized protein from Rickettsia typhi (strain ATCC VR-144 / Wilmington).